A 318-amino-acid polypeptide reads, in one-letter code: Geranylfarnesyl diphosphate synthase (318 aa).

Isopentenyl diphosphate contacts are provided by Lys31, Arg34, and His65. Mg(2+)-binding residues include Asp72 and Asp76. An an all-trans-polyprenyl diphosphate-binding site is contributed by Arg81. Arg82 contributes to the isopentenyl diphosphate binding site. Positions 166, 167, and 204 each coordinate an all-trans-polyprenyl diphosphate.

It belongs to the FPP/GGPP synthase family. Homodimer. Requires Mg(2+) as cofactor.

It carries out the reaction isopentenyl diphosphate + (2E,6E,10E)-geranylgeranyl diphosphate = (2E,6E,10E,14E)-geranylfarnesyl diphosphate + diphosphate. Probably involved in biosynthesis of the precursor for C25 (sesterterpanyl chain) moiety of C25-C25 diether (2,3-di-O-sesterterpanyl-sn-glycero) membrane lipid. Catalyzes the condensation of isopentenyl pyrophosphate with the allylic pyrophosphates to yield all-trans geranylfarnesyl diphosphate (GFPP). Geranylgeranyl diphosphate (GGPP) is the preferred substrate, however methylallyl diphosphate (DMAPP), farnesyl diphosphate (FPP) and geranyl diphosphate (GPP) can also be used as allylic substrate. In Aeropyrum pernix, this protein is Geranylfarnesyl diphosphate synthase (fgs).